Consider the following 288-residue polypeptide: UPF0494 membrane protein C212.04c (288 aa).

The next 4 membrane-spanning stretches (helical) occupy residues 107 to 127 (WVLL…KFKI), 144 to 164 (IWGP…AFNY), 174 to 194 (PLIS…SVII), and 198 to 218 (IAGV…GVIA).

This sequence belongs to the UPF0494 family.

Its subcellular location is the cytoplasm. The protein resides in the endoplasmic reticulum. It localises to the membrane. The protein is UPF0494 membrane protein C212.04c of Schizosaccharomyces pombe (strain 972 / ATCC 24843) (Fission yeast).